The sequence spans 115 residues: Large ribosomal subunit protein bL20 (115 aa).

This sequence belongs to the bacterial ribosomal protein bL20 family.

In terms of biological role, binds directly to 23S ribosomal RNA and is necessary for the in vitro assembly process of the 50S ribosomal subunit. It is not involved in the protein synthesizing functions of that subunit. In Prochlorococcus marinus (strain MIT 9313), this protein is Large ribosomal subunit protein bL20.